The primary structure comprises 711 residues: Protein Smaug homolog 1 (711 aa).

Serine 168 carries the post-translational modification Phosphoserine. The disordered stretch occupies residues 278 to 323 (ARGPQCLPSDHAPLSPQSSVASSGSGGSEHLEDQTTARNTFQEEGS). The 74-residue stretch at 323-396 (SGMKDVPAWL…LKSLERDIIE (74 aa)) folds into the SAM domain. Serine 420 bears the Phosphoserine mark. Disordered regions lie at residues 422-448 (STTP…SAAA) and 565-588 (NRGF…GRRN). Phosphothreonine is present on threonine 424. Arginine 566 bears the Omega-N-methylarginine mark. Polar residues predominate over residues 568–581 (FGQSNSLPTASSVG). Serine 573 is modified (phosphoserine).

Belongs to the SMAUG family. In terms of tissue distribution, expressed in brain (at protein level).

Its subcellular location is the cytoplasm. The protein resides in the cell projection. The protein localises to the dendrite. It localises to the synapse. It is found in the synaptosome. Its function is as follows. Acts as a translational repressor of SRE-containing messengers. The sequence is that of Protein Smaug homolog 1 (Samd4a) from Mus musculus (Mouse).